We begin with the raw amino-acid sequence, 141 residues long: Large ribosomal subunit protein uL11 (141 aa).

The protein belongs to the universal ribosomal protein uL11 family. In terms of assembly, part of the ribosomal stalk of the 50S ribosomal subunit. Interacts with L10 and the large rRNA to form the base of the stalk. L10 forms an elongated spine to which L12 dimers bind in a sequential fashion forming a multimeric L10(L12)X complex. One or more lysine residues are methylated.

Forms part of the ribosomal stalk which helps the ribosome interact with GTP-bound translation factors. The protein is Large ribosomal subunit protein uL11 of Streptococcus thermophilus (strain CNRZ 1066).